The primary structure comprises 247 residues: Histone acetyltransferase MCC1 (247 aa).

Residues 25-198 enclose the N-acetyltransferase domain; that stretch reads IHYRPINPND…DAFLFVYFIN (174 aa).

Belongs to the acetyltransferase family.

The catalysed reaction is L-lysyl-[protein] + acetyl-CoA = N(6)-acetyl-L-lysyl-[protein] + CoA + H(+). Functionally, histone acetyltransferase that probably regulates acetylation status of histone H3 during meiosis. Histone acetylation may influence recombination and chromosome segregation. The sequence is that of Histone acetyltransferase MCC1 (MCC1) from Arabidopsis thaliana (Mouse-ear cress).